The sequence spans 327 residues: Zinc transport protein ZntB (327 aa).

The Cytoplasmic segment spans residues M1–S271. Residues L272 to G292 form a helical membrane-spanning segment. At G293 to Y300 the chain is on the periplasmic side. A helical transmembrane segment spans residues L301–L321. Residues K322 to L327 are Cytoplasmic-facing.

This sequence belongs to the CorA metal ion transporter (MIT) (TC 1.A.35) family.

It is found in the cell inner membrane. It carries out the reaction Zn(2+)(out) + H(+)(out) = Zn(2+)(in) + H(+)(in). In terms of biological role, zinc transporter. Acts as a Zn(2+):proton symporter, which likely mediates zinc ion uptake. The sequence is that of Zinc transport protein ZntB from Photorhabdus laumondii subsp. laumondii (strain DSM 15139 / CIP 105565 / TT01) (Photorhabdus luminescens subsp. laumondii).